A 572-amino-acid chain; its full sequence is MRTSQYLLSTLKETPADAEVISHQLMLRAGMIRKLASGLYTWLPTGLRVLKKVENIVREEMNNAGAIEVSMPVVQPADLWQESGRWEQYGPELLRFVDRGERPFVLGPTHEEVITDLVRNELSSYKQLPLNFFQIQTKFRDEVRPRFGVMRSREFLMKDAYSFHTSQESLQETYDAMYAAYSRIFSRMGLDFRAVQADTGSIGGNASHEFQVLAQSGEDDIVFSDVSDYAANIELAEAIAPQTPRAAATQEMTLVDTPNAKTIAELVEQFNLPIEKTVKTLLVKAAKDSKSTLVALLVRGDHELNEVKAEKLPHVASPLTFATEEEIRAVINAGPGSLGPVNMPIPVIIDRTVAAMSDFAAGANIDGKHYFGINWDRDVATPVVADIRNVVAGDPSPDGQGTLLIKRGIEVGHIFQLGTKYSEALKASVQGEDGRNQILTMGCYGIGVTRVVAAAIEQNFDERGIVWPDAIAPFQVAILPMNMHKSFRVQELAEKLYSELRAQGIEVLMDDRKERPGVMFADMELIGIPHTIVIGDRNLDNDDIEYKYRRSGKKSLIKTGDIVDYLVKAIKG.

Belongs to the class-II aminoacyl-tRNA synthetase family. ProS type 1 subfamily. Homodimer.

It localises to the cytoplasm. It carries out the reaction tRNA(Pro) + L-proline + ATP = L-prolyl-tRNA(Pro) + AMP + diphosphate. Catalyzes the attachment of proline to tRNA(Pro) in a two-step reaction: proline is first activated by ATP to form Pro-AMP and then transferred to the acceptor end of tRNA(Pro). As ProRS can inadvertently accommodate and process non-cognate amino acids such as alanine and cysteine, to avoid such errors it has two additional distinct editing activities against alanine. One activity is designated as 'pretransfer' editing and involves the tRNA(Pro)-independent hydrolysis of activated Ala-AMP. The other activity is designated 'posttransfer' editing and involves deacylation of mischarged Ala-tRNA(Pro). The misacylated Cys-tRNA(Pro) is not edited by ProRS. The polypeptide is Proline--tRNA ligase (Salmonella choleraesuis (strain SC-B67)).